The primary structure comprises 336 residues: UbiA prenyltransferase domain-containing protein 1 (336 aa).

Ala-2 carries the post-translational modification N-acetylalanine. The next 8 membrane-spanning stretches (helical) occupy residues 81-101 (LLLG…LVNT), 132-152 (FGVF…YLSA), 158-178 (LALI…GIGF), 186-206 (LVIL…VQVG), 207-227 (SLAI…EAIL), 243-265 (IVTL…LLFV), 275-295 (THCS…FSLE), and 313-333 (LNLL…AGSL).

Belongs to the UbiA prenyltransferase family. Interacts with HMGCR and SOAT1.

The protein localises to the endoplasmic reticulum membrane. Its subcellular location is the golgi apparatus membrane. The protein resides in the mitochondrion membrane. The catalysed reaction is menadiol + (2E,6E,10E)-geranylgeranyl diphosphate = menaquinol-4 + diphosphate. The enzyme catalyses all-trans-decaprenyl diphosphate + 4-hydroxybenzoate = 4-hydroxy-3-(all-trans-decaprenyl)benzoate + diphosphate. It participates in quinol/quinone metabolism; menaquinone biosynthesis. Its pathway is cofactor biosynthesis; ubiquinone biosynthesis. In terms of biological role, prenyltransferase that mediates the formation of menaquinone-4 (MK-4) and coenzyme Q10. MK-4 is a vitamin K2 isoform required for endothelial cell development. Mediates the conversion of phylloquinone (PK) into MK-4, probably by cleaving the side chain of phylloquinone (PK) to release 2-methyl-1,4-naphthoquinone (menadione; K3) and then prenylating it with geranylgeranyl pyrophosphate (GGPP) to form MK-4. Also plays a role in cardiovascular development independently of MK-4 biosynthesis, by acting as a coenzyme Q10 biosynthetic enzyme: coenzyme Q10, also named ubiquinone, plays an important antioxidant role in the cardiovascular system. Mediates biosynthesis of coenzyme Q10 in the Golgi membrane, leading to protect cardiovascular tissues from NOS3/eNOS-dependent oxidative stress. The polypeptide is UbiA prenyltransferase domain-containing protein 1 (Ubiad1) (Mus musculus (Mouse)).